A 62-amino-acid polypeptide reads, in one-letter code: DNA-directed RNA polymerase subunit Rpo10 (62 aa).

Cys6, Cys9, Cys43, and Cys44 together coordinate Zn(2+).

Belongs to the archaeal Rpo10/eukaryotic RPB10 RNA polymerase subunit family. As to quaternary structure, part of the RNA polymerase complex. Zn(2+) serves as cofactor.

It is found in the cytoplasm. The enzyme catalyses RNA(n) + a ribonucleoside 5'-triphosphate = RNA(n+1) + diphosphate. DNA-dependent RNA polymerase (RNAP) catalyzes the transcription of DNA into RNA using the four ribonucleoside triphosphates as substrates. In Methanosarcina barkeri (strain Fusaro / DSM 804), this protein is DNA-directed RNA polymerase subunit Rpo10.